Reading from the N-terminus, the 205-residue chain is Potassium-transporting ATPase KdpC subunit (205 aa).

Residues 9–29 (VFAVLFLFILGFVYPTVTSLI) traverse the membrane as a helical segment.

Belongs to the KdpC family. In terms of assembly, the system is composed of three essential subunits: KdpA, KdpB and KdpC.

Its subcellular location is the cell membrane. Functionally, part of the high-affinity ATP-driven potassium transport (or Kdp) system, which catalyzes the hydrolysis of ATP coupled with the electrogenic transport of potassium into the cytoplasm. This subunit acts as a catalytic chaperone that increases the ATP-binding affinity of the ATP-hydrolyzing subunit KdpB by the formation of a transient KdpB/KdpC/ATP ternary complex. The chain is Potassium-transporting ATPase KdpC subunit from Thermoplasma acidophilum (strain ATCC 25905 / DSM 1728 / JCM 9062 / NBRC 15155 / AMRC-C165).